The chain runs to 205 residues: Adenylyl-sulfate kinase (205 aa).

35-42 (GLSGAGKS) provides a ligand contact to ATP. Ser109 (phosphoserine intermediate) is an active-site residue.

This sequence belongs to the APS kinase family.

It carries out the reaction adenosine 5'-phosphosulfate + ATP = 3'-phosphoadenylyl sulfate + ADP + H(+). The protein operates within sulfur metabolism; hydrogen sulfide biosynthesis; sulfite from sulfate: step 2/3. Its function is as follows. Catalyzes the synthesis of activated sulfate. The sequence is that of Adenylyl-sulfate kinase from Acaryochloris marina (strain MBIC 11017).